A 596-amino-acid chain; its full sequence is Elongation factor 4 (596 aa).

Positions 2-183 constitute a tr-type G domain; sequence ENIRNFSIIA…AIIKRIPAPK (182 aa). Residues 14 to 19 and 130 to 133 contribute to the GTP site; these read DHGKST and NKID.

Belongs to the TRAFAC class translation factor GTPase superfamily. Classic translation factor GTPase family. LepA subfamily.

Its subcellular location is the cell inner membrane. It carries out the reaction GTP + H2O = GDP + phosphate + H(+). Required for accurate and efficient protein synthesis under certain stress conditions. May act as a fidelity factor of the translation reaction, by catalyzing a one-codon backward translocation of tRNAs on improperly translocated ribosomes. Back-translocation proceeds from a post-translocation (POST) complex to a pre-translocation (PRE) complex, thus giving elongation factor G a second chance to translocate the tRNAs correctly. Binds to ribosomes in a GTP-dependent manner. The protein is Elongation factor 4 of Campylobacter hominis (strain ATCC BAA-381 / DSM 21671 / CCUG 45161 / LMG 19568 / NCTC 13146 / CH001A).